A 225-amino-acid chain; its full sequence is Ribosome maturation factor RimM (225 aa).

Residues 144-225 (ADEFYWVDLI…RIVVDWEADY (82 aa)) enclose the PRC barrel domain.

This sequence belongs to the RimM family. As to quaternary structure, binds ribosomal protein uS19.

The protein resides in the cytoplasm. An accessory protein needed during the final step in the assembly of 30S ribosomal subunit, possibly for assembly of the head region. Essential for efficient processing of 16S rRNA. May be needed both before and after RbfA during the maturation of 16S rRNA. It has affinity for free ribosomal 30S subunits but not for 70S ribosomes. The chain is Ribosome maturation factor RimM from Burkholderia ambifaria (strain MC40-6).